Reading from the N-terminus, the 336-residue chain is Probable allantoicase 2 (336 aa).

Belongs to the allantoicase family.

The enzyme catalyses allantoate + H2O = (S)-ureidoglycolate + urea. It functions in the pathway nitrogen metabolism; (S)-allantoin degradation; (S)-ureidoglycolate from allantoate (aminidohydrolase route): step 1/1. The protein is Probable allantoicase 2 of Burkholderia mallei (strain ATCC 23344).